The chain runs to 762 residues: Molybdenum cofactor sulfurase 2 (762 aa).

An N6-(pyridoxal phosphate)lysine modification is found at K234. The active site involves C400. Residues 590–738 (AWISKALRMP…LECGSILEPV (149 aa)) enclose the MOSC domain.

This sequence belongs to the class-V pyridoxal-phosphate-dependent aminotransferase family. MOCOS subfamily. Pyridoxal 5'-phosphate serves as cofactor.

It catalyses the reaction Mo-molybdopterin + L-cysteine + AH2 = thio-Mo-molybdopterin + L-alanine + A + H2O. Its function is as follows. Sulfurates the molybdenum cofactor. Sulfation of molybdenum is essential for xanthine dehydrogenase (XDH) and aldehyde oxidase (ADO) enzymes in which molybdenum cofactor is liganded by 1 oxygen and 1 sulfur atom in active form. In Aedes aegypti (Yellowfever mosquito), this protein is Molybdenum cofactor sulfurase 2.